We begin with the raw amino-acid sequence, 130 residues long: Small ribosomal subunit protein uS9 (130 aa).

This sequence belongs to the universal ribosomal protein uS9 family.

In Caldicellulosiruptor saccharolyticus (strain ATCC 43494 / DSM 8903 / Tp8T 6331), this protein is Small ribosomal subunit protein uS9.